The following is a 107-amino-acid chain: uncharacterized protein (107 aa).

Residues 13–33 traverse the membrane as a helical segment; the sequence is VLIVTFLSSFIFIVWLPVALV.

It localises to the membrane. This is an uncharacterized protein from Saccharomyces cerevisiae (strain ATCC 204508 / S288c) (Baker's yeast).